The sequence spans 429 residues: Z-DNA-binding protein 1 (429 aa).

2 consecutive Z-binding domains span residues Pro8–Gly70 and Pro103–Arg166. Residues Leu68 to Gln107 are disordered. Short sequence motifs (RIP homotypic interaction motif (RHIM)) lie at residues Asn195–Val219 and Asp253–Val277. 2 disordered regions span residues Val277 to Pro299 and Lys339 to Ile429. Positions Ala347–Gly358 are enriched in gly residues. Positions Lys407–His420 are enriched in basic and acidic residues.

In terms of assembly, homodimer. Interacts (via RIP homotypic interaction motif) with RIPK3; leading to RIPK3 activation and necroptosis; interaction is enhanced by CASP6. Interacts (via RIP homotypic interaction motif) with RIPK1. Component of the AIM2 PANoptosome complex, a multiprotein complex that drives inflammatory cell death (PANoptosis). As to quaternary structure, (Microbial infection) Interacts (via RIP homotypic interaction motif/RHIM) with herpes simplex virus 1/HHV-1 protein RIR1/ICP6 (via RHIM); this interaction may induce heteromeric amyloid assemblies and prevent necroptosis activation. Interacts with human herpes simplex virus 1/HHV-1 protein ICP0. In terms of processing, phosphorylated. In terms of tissue distribution, highly expressed in lymphatic tissues including lymph node, leukocytes, tonsil, bone marrow and spleen. Expressed to a lesser extent in thymus, lung and liver.

It is found in the cytoplasm. Its subcellular location is the nucleus. ZBP1-dependent necroptosis is normally inhibited by RIPK1: RIPK1 inhibits the ZBP1-induced activation of RIPK3 via FADD-mediated recruitment of CASP8, which cleaves RIPK1 and limits TNF-induced necroptosis. Key innate sensor that recognizes and binds Z-RNA structures, which are produced by a number of viruses, such as herpesvirus, orthomyxovirus or flavivirus, and triggers different forms of cell death. ZBP1 acts as an essential mediator of pyroptosis, necroptosis and apoptosis (PANoptosis), an integral part of host defense against pathogens, by activating RIPK3, caspase-8 (CASP8), and the NLRP3 inflammasome. Key activator of necroptosis, a programmed cell death process in response to death-inducing TNF-alpha family members, via its ability to bind Z-RNA: once activated upon Z-RNA-binding, ZBP1 interacts and stimulates RIPK3 kinase, which phosphorylates and activates MLKL, triggering execution of programmed necrosis. In addition to TNF-induced necroptosis, necroptosis can also take place in the nucleus in response to orthomyxoviruses infection: ZBP1 recognizes and binds Z-RNA structures that are produced in infected nuclei by orthomyxoviruses, such as the influenza A virus (IAV), leading to ZBP1 activation, RIPK3 stimulation and subsequent MLKL phosphorylation, triggering disruption of the nuclear envelope and leakage of cellular DNA into the cytosol. ZBP1-dependent cell death in response to IAV infection promotes interleukin-1 alpha (IL1A) induction in an NLRP3-inflammasome-independent manner: IL1A expression is required for the optimal interleukin-1 beta (IL1B) production, and together, these cytokines promote infiltration of inflammatory neutrophils to the lung, leading to the formation of neutrophil extracellular traps. In addition to its direct role in driving necroptosis via its ability to sense Z-RNAs, also involved in PANoptosis triggered in response to bacterial infection: component of the AIM2 PANoptosome complex, a multiprotein complex that triggers PANoptosis. Also acts as the apical sensor of fungal infection responsible for activating PANoptosis. Involved in CASP8-mediated cell death via its interaction with RIPK1 but independently of its ability to sense Z-RNAs. In some cell types, also able to restrict viral replication by promoting cell death-independent responses. In response to Zika virus infection in neurons, promotes a cell death-independent pathway that restricts viral replication: together with RIPK3, promotes a death-independent transcriptional program that modifies the cellular metabolism via up-regulation expression of the enzyme ACOD1/IRG1 and production of the metabolite itaconate. Itaconate inhibits the activity of succinate dehydrogenase, generating a metabolic state in neurons that suppresses replication of viral genomes. In terms of biological role, (Microbial infection) In case of herpes simplex virus 1/HHV-1 infection, forms hetero-amyloid structures with HHV-1 protein RIR1/ICP6 which may inhibit ZBP1-mediated necroptosis, thereby preventing host cell death pathway and allowing viral evasion. This is Z-DNA-binding protein 1 from Homo sapiens (Human).